Consider the following 72-residue polypeptide: Translation initiation factor IF-1 (72 aa).

The S1-like domain occupies 1 to 72 (MAKEDVIEVE…TRGRITYRYK (72 aa)). A Phosphotyrosine modification is found at Y60.

It belongs to the IF-1 family. Component of the 30S ribosomal translation pre-initiation complex which assembles on the 30S ribosome in the order IF-2 and IF-3, IF-1 and N-formylmethionyl-tRNA(fMet); mRNA recruitment can occur at any time during PIC assembly.

Its subcellular location is the cytoplasm. Its function is as follows. One of the essential components for the initiation of protein synthesis. Stabilizes the binding of IF-2 and IF-3 on the 30S subunit to which N-formylmethionyl-tRNA(fMet) subsequently binds. Helps modulate mRNA selection, yielding the 30S pre-initiation complex (PIC). Upon addition of the 50S ribosomal subunit IF-1, IF-2 and IF-3 are released leaving the mature 70S translation initiation complex. In Shouchella clausii (strain KSM-K16) (Alkalihalobacillus clausii), this protein is Translation initiation factor IF-1.